The sequence spans 64 residues: Defensin-like protein 123 (64 aa).

Disulfide bonds link Cys-19-Cys-62, Cys-29-Cys-49, Cys-34-Cys-56, and Cys-38-Cys-58.

It belongs to the DEFL family.

This chain is Defensin-like protein 123, found in Arabidopsis thaliana (Mouse-ear cress).